The following is a 224-amino-acid chain: N-(5'-phosphoribosyl)anthranilate isomerase (224 aa).

The protein belongs to the TrpF family.

It carries out the reaction N-(5-phospho-beta-D-ribosyl)anthranilate = 1-(2-carboxyphenylamino)-1-deoxy-D-ribulose 5-phosphate. It participates in amino-acid biosynthesis; L-tryptophan biosynthesis; L-tryptophan from chorismate: step 3/5. The chain is N-(5'-phosphoribosyl)anthranilate isomerase (TRP1) from Saccharomyces cerevisiae (strain ATCC 204508 / S288c) (Baker's yeast).